Reading from the N-terminus, the 354-residue chain is Homeobox-leucine zipper protein HOX27 (354 aa).

The interval 98–175 is disordered; it reads SVAAGAPGME…DDEGASARKK (78 aa). The span at 148–157 shows a compositional bias: gly residues; it reads QGGGGGGGGE. Residues 171 to 230 constitute a DNA-binding region (homeobox); the sequence is SARKKLRLSKEQSAFLEESFKEHSTLNPKQKVALAKQLNLRPRQVEVWFQNRRARTKLKQ. The segment at 229 to 273 is leucine-zipper; the sequence is KQTEVDCEYLKRCCETLTEENRRLHKELAELRALKTARPFYMHLP. The interval 294–323 is disordered; it reads STSAPAAATSPAAAPTAAARTAVASPEPHR.

This sequence belongs to the HD-ZIP homeobox family. Class II subfamily. As to expression, expressed in seedlings, roots, stems, leaf sheaths and blades and panicles.

Its subcellular location is the nucleus. Functionally, probable transcription factor. This Oryza sativa subsp. indica (Rice) protein is Homeobox-leucine zipper protein HOX27 (HOX27).